Reading from the N-terminus, the 183-residue chain is U3 small nucleolar ribonucleoprotein protein imp3 (183 aa).

Residues arginine 108 to asparagine 174 enclose the S4 RNA-binding domain.

This sequence belongs to the universal ribosomal protein uS4 family. As to quaternary structure, component of a heterotrimeric complex containing imp3, imp4 and mpp10.

Its subcellular location is the nucleus. It is found in the nucleolus. Component of the U3 small nucleolar ribonucleoprotein. Required for the early cleavages at sites A0, A1 and A2 during 18S ribosomal pre-RNA processing. In Caenorhabditis elegans, this protein is U3 small nucleolar ribonucleoprotein protein imp3.